A 94-amino-acid chain; its full sequence is Selenoprotein K (94 aa).

The chain crosses the membrane as a helical span at residues 20–42 (LSFITDFFWGIAEFVVLFFRTLL). The disordered stretch occupies residues 48–94 (KRRGYGGSSDSRYDDGRGPPGNPPRRMGRINHLRGPNPPPMAGGUGR). Residue Sec92 is a non-standard amino acid, selenocysteine.

It belongs to the selenoprotein K family. Interacts with DERL1, DERL2, DERL3 and SELENOS. The SELENOK-SELENOS complex interacts with VCP. Interacts with ZDHHC6. In terms of processing, cleaved by CAPN2/m-calpain in resting macrophages but not in activated macrophages. Macrophage activation up-regulates expression of the calpain inhibitor CAST/calpastatin, resulting in inhibition of CAPN2 activity. Post-translationally, truncated SELENOK proteins produced by failed UGA/Sec decoding are ubiquitinated by the CRL2(KLHDC2) complex, which recognizes the diglycine (Gly-Gly) at the C-terminus of truncated SELENOK proteins.

It is found in the endoplasmic reticulum membrane. The protein resides in the cell membrane. In terms of biological role, required for Ca(2+) flux in immune cells and plays a role in T-cell proliferation and in T-cell and neutrophil migration. Involved in endoplasmic reticulum-associated degradation (ERAD) of soluble glycosylated proteins. Required for palmitoylation and cell surface expression of CD36 and involved in macrophage uptake of low-density lipoprotein and in foam cell formation. Together with ZDHHC6, required for palmitoylation of ITPR1 in immune cells, leading to regulate ITPR1 stability and function. Plays a role in protection of cells from ER stress-induced apoptosis. Protects cells from oxidative stress when overexpressed in cardiomyocytes. In Sus scrofa (Pig), this protein is Selenoprotein K.